Here is a 144-residue protein sequence, read N- to C-terminus: Cytochrome c oxidase subunit 4 isoform 1, mitochondrial (144 aa).

Residues 1-73 (SVVKSEDYTL…SFAEMNRGSN (73 aa)) lie on the Mitochondrial matrix side of the membrane. Residue Lys4 is modified to N6-acetyllysine; alternate. Lys4 carries the N6-succinyllysine; alternate modification. A phosphoserine mark is found at Ser31 and Ser33. Lys35 is subject to N6-acetyllysine; alternate. Lys35 is modified (N6-succinyllysine; alternate). An N6-acetyllysine modification is found at Lys42. Residues 74-99 (EWKTVVGAAMFFIGFTAILIMLEKRY) form a helical membrane-spanning segment. The Mitochondrial intermembrane portion of the chain corresponds to 100–144 (VYGPLPHTFDKEWVAMQTKRMLDLKVNPVDGLASKWDYEKKEWKK).

Belongs to the cytochrome c oxidase IV family. In terms of assembly, component of the cytochrome c oxidase (complex IV, CIV), a multisubunit enzyme composed of 14 subunits. The complex is composed of a catalytic core of 3 subunits MT-CO1, MT-CO2 and MT-CO3, encoded in the mitochondrial DNA, and 11 supernumerary subunits COX4I, COX5A, COX5B, COX6A, COX6B, COX6C, COX7A, COX7B, COX7C, COX8 and NDUFA4, which are encoded in the nuclear genome. The complex exists as a monomer or a dimer and forms supercomplexes (SCs) in the inner mitochondrial membrane with NADH-ubiquinone oxidoreductase (complex I, CI) and ubiquinol-cytochrome c oxidoreductase (cytochrome b-c1 complex, complex III, CIII), resulting in different assemblies (supercomplex SCI(1)III(2)IV(1) and megacomplex MCI(2)III(2)IV(2)). Interacts with PHB2; the interaction decreases in absence of SPHK2. Interacts with AFG1L. Interacts with ABCB7; this interaction allows the regulation of cellular iron homeostasis and cellular reactive oxygen species (ROS) levels in cardiomyocytes. Interacts with FLVCR2; this interaction occurs in the absence of heme and is disrupted upon heme binding. Interacts with IRGC.

The protein resides in the mitochondrion inner membrane. It functions in the pathway energy metabolism; oxidative phosphorylation. Functionally, component of the cytochrome c oxidase, the last enzyme in the mitochondrial electron transport chain which drives oxidative phosphorylation. The respiratory chain contains 3 multisubunit complexes succinate dehydrogenase (complex II, CII), ubiquinol-cytochrome c oxidoreductase (cytochrome b-c1 complex, complex III, CIII) and cytochrome c oxidase (complex IV, CIV), that cooperate to transfer electrons derived from NADH and succinate to molecular oxygen, creating an electrochemical gradient over the inner membrane that drives transmembrane transport and the ATP synthase. Cytochrome c oxidase is the component of the respiratory chain that catalyzes the reduction of oxygen to water. Electrons originating from reduced cytochrome c in the intermembrane space (IMS) are transferred via the dinuclear copper A center (CU(A)) of subunit 2 and heme A of subunit 1 to the active site in subunit 1, a binuclear center (BNC) formed by heme A3 and copper B (CU(B)). The BNC reduces molecular oxygen to 2 water molecules using 4 electrons from cytochrome c in the IMS and 4 protons from the mitochondrial matrix. This chain is Cytochrome c oxidase subunit 4 isoform 1, mitochondrial (COX4I1), found in Pithecia pithecia (White-faced saki).